The sequence spans 418 residues: 26S proteasome regulatory subunit 6B (418 aa).

M1 is modified (N-acetylmethionine). S21 carries the post-translational modification Phosphoserine. T25 carries the phosphothreonine modification. At S28 the chain carries Phosphoserine. 206–213 contributes to the ATP binding site; it reads GPPGCGKT. K397 and K401 each carry N6-acetyllysine.

Belongs to the AAA ATPase family. In terms of assembly, component of the 19S proteasome regulatory particle complex. The 26S proteasome consists of a 20S core particle (CP) and two 19S regulatory subunits (RP). The regulatory particle is made of a lid composed of 9 subunits, a base containing 6 ATPases including PSMC4 and few additional components. Interacts with NR1I3. Interacts with PAAF1. Interacts with TRIM5. Interacts with ZFAND1.

Its subcellular location is the cytoplasm. It localises to the nucleus. Component of the 26S proteasome, a multiprotein complex involved in the ATP-dependent degradation of ubiquitinated proteins. This complex plays a key role in the maintenance of protein homeostasis by removing misfolded or damaged proteins, which could impair cellular functions, and by removing proteins whose functions are no longer required. Therefore, the proteasome participates in numerous cellular processes, including cell cycle progression, apoptosis, or DNA damage repair. PSMC4 belongs to the heterohexameric ring of AAA (ATPases associated with diverse cellular activities) proteins that unfolds ubiquitinated target proteins that are concurrently translocated into a proteolytic chamber and degraded into peptides. The sequence is that of 26S proteasome regulatory subunit 6B (Psmc4) from Mus musculus (Mouse).